A 926-amino-acid polypeptide reads, in one-letter code: Protein transport protein SEC24-2 (926 aa).

The segment at 1-54 (MSHHKKRVYPQAQAQYGQSATPLQQPAQLVPPQDPAAAGMSYAQMGMPPQGAAA) is disordered. Residues 20–54 (ATPLQQPAQLVPPQDPAAAGMSYAQMGMPPQGAAA) show a composition bias toward low complexity. Residues C231, C234, C253, and C256 each contribute to the Zn(2+) site. The tract at residues 231–256 (CRRCRSYMNPFITFIEQGRRWRCNFC) is zinc finger-like.

This sequence belongs to the SEC23/SEC24 family. SEC24 subfamily. The COPII coat is composed of at least 5 proteins: the SEC23/24 complex, the SEC13/31 complex, and the protein SAR1. Golgi apparatus membrane; Peripheral membrane protein; Cytoplasmic side.

Its subcellular location is the cytoplasm. It is found in the cytoplasmic vesicle. The protein localises to the COPII-coated vesicle membrane. The protein resides in the endoplasmic reticulum membrane. It localises to the golgi apparatus membrane. Component of the coat protein complex II (COPII) which promotes the formation of transport vesicles from the endoplasmic reticulum (ER). The coat has two main functions, the physical deformation of the endoplasmic reticulum membrane into vesicles and the selection of cargo molecules. The protein is Protein transport protein SEC24-2 (SEC242) of Saccharomyces uvarum (strain ATCC 76518 / CBS 7001 / CLIB 283 / NBRC 10550 / MCYC 623 / NCYC 2669 / NRRL Y-11845) (Yeast).